Here is a 64-residue protein sequence, read N- to C-terminus: MPKMKTHSGAKKRFKLTGSGKLRRQQANRRHYLEHKSSRLTRRLAGDKIVFKGDAKVIRKMLGI.

The tract at residues 1–29 (MPKMKTHSGAKKRFKLTGSGKLRRQQANR) is disordered.

This sequence belongs to the bacterial ribosomal protein bL35 family.

The protein is Large ribosomal subunit protein bL35 of Pseudarthrobacter chlorophenolicus (strain ATCC 700700 / DSM 12829 / CIP 107037 / JCM 12360 / KCTC 9906 / NCIMB 13794 / A6) (Arthrobacter chlorophenolicus).